We begin with the raw amino-acid sequence, 236 residues long: Phosphatidylserine decarboxylase proenzyme (236 aa).

Residue Ser203 is the Schiff-base intermediate with substrate; via pyruvic acid of the active site. Ser203 carries the pyruvic acid (Ser); by autocatalysis modification.

This sequence belongs to the phosphatidylserine decarboxylase family. PSD-A subfamily. In terms of assembly, heterodimer of a large membrane-associated beta subunit and a small pyruvoyl-containing alpha subunit. Pyruvate serves as cofactor. Is synthesized initially as an inactive proenzyme. Formation of the active enzyme involves a self-maturation process in which the active site pyruvoyl group is generated from an internal serine residue via an autocatalytic post-translational modification. Two non-identical subunits are generated from the proenzyme in this reaction, and the pyruvate is formed at the N-terminus of the alpha chain, which is derived from the carboxyl end of the proenzyme. The post-translation cleavage follows an unusual pathway, termed non-hydrolytic serinolysis, in which the side chain hydroxyl group of the serine supplies its oxygen atom to form the C-terminus of the beta chain, while the remainder of the serine residue undergoes an oxidative deamination to produce ammonia and the pyruvoyl prosthetic group on the alpha chain.

The protein localises to the cell membrane. The enzyme catalyses a 1,2-diacyl-sn-glycero-3-phospho-L-serine + H(+) = a 1,2-diacyl-sn-glycero-3-phosphoethanolamine + CO2. Its pathway is phospholipid metabolism; phosphatidylethanolamine biosynthesis; phosphatidylethanolamine from CDP-diacylglycerol: step 2/2. In terms of biological role, catalyzes the formation of phosphatidylethanolamine (PtdEtn) from phosphatidylserine (PtdSer). The sequence is that of Phosphatidylserine decarboxylase proenzyme from Saccharopolyspora erythraea (strain ATCC 11635 / DSM 40517 / JCM 4748 / NBRC 13426 / NCIMB 8594 / NRRL 2338).